The sequence spans 366 residues: Chorismate synthase (366 aa).

NADP(+)-binding residues include Arg48 and Arg54. FMN is bound by residues 125-127 (RSS), 238-239 (NA), Gly278, 293-297 (KPTSS), and Arg319.

It belongs to the chorismate synthase family. As to quaternary structure, homotetramer. FMNH2 serves as cofactor.

It carries out the reaction 5-O-(1-carboxyvinyl)-3-phosphoshikimate = chorismate + phosphate. It functions in the pathway metabolic intermediate biosynthesis; chorismate biosynthesis; chorismate from D-erythrose 4-phosphate and phosphoenolpyruvate: step 7/7. Catalyzes the anti-1,4-elimination of the C-3 phosphate and the C-6 proR hydrogen from 5-enolpyruvylshikimate-3-phosphate (EPSP) to yield chorismate, which is the branch point compound that serves as the starting substrate for the three terminal pathways of aromatic amino acid biosynthesis. This reaction introduces a second double bond into the aromatic ring system. In Paraburkholderia phymatum (strain DSM 17167 / CIP 108236 / LMG 21445 / STM815) (Burkholderia phymatum), this protein is Chorismate synthase.